The primary structure comprises 355 residues: RNA 3'-terminal phosphate cyclase (355 aa).

Residues Gln109 and 291-295 (HLADQ) contribute to the ATP site. Residue His316 is the Tele-AMP-histidine intermediate of the active site.

Belongs to the RNA 3'-terminal cyclase family. Type 1 subfamily.

It localises to the cytoplasm. The enzyme catalyses a 3'-end 3'-phospho-ribonucleotide-RNA + ATP = a 3'-end 2',3'-cyclophospho-ribonucleotide-RNA + AMP + diphosphate. In terms of biological role, catalyzes the conversion of 3'-phosphate to a 2',3'-cyclic phosphodiester at the end of RNA. The mechanism of action of the enzyme occurs in 3 steps: (A) adenylation of the enzyme by ATP; (B) transfer of adenylate to an RNA-N3'P to produce RNA-N3'PP5'A; (C) and attack of the adjacent 2'-hydroxyl on the 3'-phosphorus in the diester linkage to produce the cyclic end product. The biological role of this enzyme is unknown but it is likely to function in some aspects of cellular RNA processing. This chain is RNA 3'-terminal phosphate cyclase, found in Koribacter versatilis (strain Ellin345).